A 420-amino-acid polypeptide reads, in one-letter code: Pyruvate dehydrogenase E1 component subunit alpha, mitochondrial (420 aa).

The N-terminal 33 residues, 1 to 33 (MLAASFKRQPSQLVRGLGAVLRTPTRIGHVRTM), are a transit peptide targeting the mitochondrion. Pyruvate is bound by residues H112, Y138, R139, A177, G185, V187, D216, G217, A218, N245, and Y247. Residues Y138 and R139 each coordinate thiamine diphosphate. The thiamine diphosphate site is built by G185, V187, D216, G217, A218, and N245. Residue D216 coordinates Mg(2+). Mg(2+) is bound by residues N245 and Y247. Residue H312 participates in thiamine diphosphate binding. At S313 the chain carries Phosphoserine; by PDK1 and PDK2.

As to quaternary structure, pyruvate dehydrogenase (E1) is a tetramer of 2 alpha and 2 beta subunits. Eukaryotic pyruvate dehydrogenase (PDH) complexes are organized as a core consisting of the oligomeric dihydrolipoamide acetyl-transferase (E2), around which are arranged multiple copies of pyruvate dehydrogenase (E1), dihydrolipoamide dehydrogenase (E3) and protein X (E3BP) bound by non-covalent bonds. Thiamine diphosphate serves as cofactor. Requires Mg(2+) as cofactor. In terms of processing, phosphorylated at Ser-313 by pyruvate dehydrogenase kinases PKP1 (PDK1) and PKP2 (PDK2), and dephosphorylated by pyruvate dehydrogenase phosphatases PTC5 and PTC6.

The protein resides in the mitochondrion matrix. It catalyses the reaction N(6)-[(R)-lipoyl]-L-lysyl-[protein] + pyruvate + H(+) = N(6)-[(R)-S(8)-acetyldihydrolipoyl]-L-lysyl-[protein] + CO2. With respect to regulation, E1 activity is regulated by phosphorylation (inactivation) and dephosphorylation (activation) of the alpha subunit. The pyruvate dehydrogenase complex catalyzes the overall conversion of pyruvate to acetyl-CoA and CO(2). In Saccharomyces cerevisiae (strain ATCC 204508 / S288c) (Baker's yeast), this protein is Pyruvate dehydrogenase E1 component subunit alpha, mitochondrial (PDA1).